We begin with the raw amino-acid sequence, 353 residues long: Protein-glutamate methylesterase/protein-glutamine glutaminase 3 (353 aa).

A Response regulatory domain is found at 3 to 120 (KVLIADDSAL…SSSSDMKKVA (118 aa)). Aspartate 54 is subject to 4-aspartylphosphate. The CheB-type methylesterase domain maps to 158 to 353 (PRPGREVTKA…AREIIRAVNR (196 aa)). Residues serine 173, histidine 200, and aspartate 296 contribute to the active site.

It belongs to the CheB family. Post-translationally, phosphorylated by CheA. Phosphorylation of the N-terminal regulatory domain activates the methylesterase activity.

It localises to the cytoplasm. The enzyme catalyses [protein]-L-glutamate 5-O-methyl ester + H2O = L-glutamyl-[protein] + methanol + H(+). It catalyses the reaction L-glutaminyl-[protein] + H2O = L-glutamyl-[protein] + NH4(+). Functionally, involved in chemotaxis. Part of a chemotaxis signal transduction system that modulates chemotaxis in response to various stimuli. Catalyzes the demethylation of specific methylglutamate residues introduced into the chemoreceptors (methyl-accepting chemotaxis proteins or MCP) by CheR. Also mediates the irreversible deamidation of specific glutamine residues to glutamic acid. The chain is Protein-glutamate methylesterase/protein-glutamine glutaminase 3 from Syntrophomonas wolfei subsp. wolfei (strain DSM 2245B / Goettingen).